The chain runs to 270 residues: Insulin-like growth factor-binding protein-like 1 (270 aa).

An N-terminal signal peptide occupies residues 1 to 17; sequence MPRLPLLLLLLPSLARG. Residues 26 to 101 enclose the IGFBP N-terminal domain; that stretch reads RHPECSPCQQ…PEGTGLCVCA (76 aa). 7 disulfides stabilise this stretch: Cys-30–Cys-55, Cys-33–Cys-57, Cys-38–Cys-58, Cys-44–Cys-61, Cys-69–Cys-83, Cys-77–Cys-98, and Cys-107–Cys-143. One can recognise a Kazal-like domain in the interval 87 to 145; it reads ASGTAPEGTGLCVCAQRGAVCGSDGRSYSSICALRLRARHAPRAHHGHLHKARDGPCEF. An Ig-like C2-type domain is found at 147–251; sequence PVVLMPPRDI…GEAQSHGTVT (105 aa). Asn-158 carries an N-linked (GlcNAc...) asparagine glycan. A disulfide bridge connects residues Cys-168 and Cys-235.

The protein localises to the secreted. Its function is as follows. IGF-binding proteins prolong the half-life of IGFs and have been shown to either inhibit or stimulate the growth promoting effects of the IGFs in cell culture. They alter the interaction of IGFs with their cell surface receptors. This is Insulin-like growth factor-binding protein-like 1 (Igfbpl1) from Mus musculus (Mouse).